The following is a 450-amino-acid chain: Ribulose bisphosphate carboxylase large chain (450 aa).

Position 4 is an N6,N6,N6-trimethyllysine (K4). Substrate is bound by residues N113 and T163. The active-site Proton acceptor is the K165. K167 is a substrate binding site. 3 residues coordinate Mg(2+): K191, D193, and E194. An N6-carboxylysine modification is found at K191. H284 (proton acceptor) is an active-site residue. Residues R285, H317, and S369 each contribute to the substrate site.

This sequence belongs to the RuBisCO large chain family. Type I subfamily. In terms of assembly, heterohexadecamer of 8 large chains and 8 small chains; disulfide-linked. The disulfide link is formed within the large subunit homodimers. Requires Mg(2+) as cofactor. Post-translationally, the disulfide bond which can form in the large chain dimeric partners within the hexadecamer appears to be associated with oxidative stress and protein turnover.

Its subcellular location is the plastid. It localises to the chloroplast. The catalysed reaction is 2 (2R)-3-phosphoglycerate + 2 H(+) = D-ribulose 1,5-bisphosphate + CO2 + H2O. The enzyme catalyses D-ribulose 1,5-bisphosphate + O2 = 2-phosphoglycolate + (2R)-3-phosphoglycerate + 2 H(+). In terms of biological role, ruBisCO catalyzes two reactions: the carboxylation of D-ribulose 1,5-bisphosphate, the primary event in carbon dioxide fixation, as well as the oxidative fragmentation of the pentose substrate in the photorespiration process. Both reactions occur simultaneously and in competition at the same active site. In Sedum rubrotinctum (Jelly bean plant), this protein is Ribulose bisphosphate carboxylase large chain.